The sequence spans 345 residues: tRNA N6-adenosine threonylcarbamoyltransferase (345 aa).

Fe cation-binding residues include histidine 113 and histidine 117. Substrate-binding positions include 142–146 (AISGG), aspartate 175, glycine 188, aspartate 192, and asparagine 282. Aspartate 310 contributes to the Fe cation binding site.

Belongs to the KAE1 / TsaD family. The cofactor is Fe(2+).

The protein localises to the cytoplasm. It carries out the reaction L-threonylcarbamoyladenylate + adenosine(37) in tRNA = N(6)-L-threonylcarbamoyladenosine(37) in tRNA + AMP + H(+). Its function is as follows. Required for the formation of a threonylcarbamoyl group on adenosine at position 37 (t(6)A37) in tRNAs that read codons beginning with adenine. Is involved in the transfer of the threonylcarbamoyl moiety of threonylcarbamoyl-AMP (TC-AMP) to the N6 group of A37, together with TsaE and TsaB. TsaD likely plays a direct catalytic role in this reaction. The protein is tRNA N6-adenosine threonylcarbamoyltransferase of Bdellovibrio bacteriovorus (strain ATCC 15356 / DSM 50701 / NCIMB 9529 / HD100).